Here is a 610-residue protein sequence, read N- to C-terminus: Zinc metalloproteinase-disintegrin-like 4a (610 aa).

The N-terminal stretch at 1–20 is a signal peptide; the sequence is MIQVLLVTISLAVFPYQGSS. A propeptide spanning residues 21–189 is cleaved from the precursor; the sequence is VILESGNVND…KKASQSNLTP (169 aa). Residues 199–395 form the Peptidase M12B domain; the sequence is KYVKLFLVAD…NMPQCILKKP (197 aa). Residue N218 is glycosylated (N-linked (GlcNAc...) asparagine). Ca(2+) is bound at residue D286. Cystine bridges form between C310–C390, C350–C374, and C352–C357. H335 lines the Zn(2+) pocket. Residue E336 is part of the active site. Positions 339 and 345 each coordinate Zn(2+). Ca(2+)-binding residues include C390, V405, N408, F410, E412, E415, and D418. Residues 403 to 488 form the Disintegrin domain; sequence PAVCGNYFVE…AECTDSFQRN (86 aa). 14 disulfides stabilise this stretch: C406–C435, C417–C430, C419–C425, C429–C452, C443–C449, C448–C474, C461–C481, C468–C499, C492–C504, C511–C561, C526–C572, C539–C549, C556–C598, and C592–C603. The D/ECD-tripeptide signature appears at 467–469; it reads ECD.

It belongs to the venom metalloproteinase (M12B) family. P-III subfamily. Zn(2+) serves as cofactor. Expressed by the venom gland.

It is found in the secreted. Its function is as follows. Snake venom metalloproteinase that impairs hemostasis in the envenomed animal. This is Zinc metalloproteinase-disintegrin-like 4a from Crotalus adamanteus (Eastern diamondback rattlesnake).